We begin with the raw amino-acid sequence, 352 residues long: Mitochondrial ubiquitin ligase activator of NFKB 1 (352 aa).

Over 1–8 (MENGGRPS) the chain is Cytoplasmic. Residues 9-29 (LCQFILLGTTSVVTAALYSVY) form a helical membrane-spanning segment. The Mitochondrial intermembrane segment spans residues 30–238 (RQKAWVSQEL…LLQRQESSVR (209 aa)). Residue Lys52 forms a Glycyl lysine isopeptide (Lys-Gly) (interchain with G-Cter in ubiquitin) linkage. A helical transmembrane segment spans residues 239-259 (LWKVLALVFGFATCATLFFIL). The Cytoplasmic segment spans residues 260 to 352 (RKQYLQRQER…ITRVIPLYNS (93 aa)). Glycyl lysine isopeptide (Lys-Gly) (interchain with G-Cter in ubiquitin) cross-links involve residues Lys273 and Lys299. An RING-type zinc finger spans residues 302 to 340 (CVVCLSSFKSCVFLECGHVCSCTECYRALPEPKKCPICR).

In terms of assembly, homooligomer. Interacts with MAP3K7/TAK1. Interacts with UBC9. Interacts with and sumoylates DNM1L. Interacts with MAVS. Interacts with TP53 (via N-terminus); the interaction leads to ubiquitination and proteasomal degradation of TP53. In terms of processing, ubiquitinated by PRKN during mitophagy, leading to its degradation and enhancement of mitophagy. Deubiquitinated by USP30.

The protein localises to the mitochondrion outer membrane. The protein resides in the peroxisome. The enzyme catalyses S-ubiquitinyl-[E2 ubiquitin-conjugating enzyme]-L-cysteine + [acceptor protein]-L-lysine = [E2 ubiquitin-conjugating enzyme]-L-cysteine + N(6)-ubiquitinyl-[acceptor protein]-L-lysine.. Its pathway is protein modification; protein ubiquitination. The protein operates within protein modification; protein sumoylation. In terms of biological role, exhibits weak E3 ubiquitin-protein ligase activity. E3 ubiquitin ligases accept ubiquitin from an E2 ubiquitin-conjugating enzyme in the form of a thioester and then directly transfer the ubiquitin to targeted substrates. Can ubiquitinate AKT1 preferentially at 'Lys-284' involving 'Lys-48'-linked polyubiquitination and seems to be involved in regulation of Akt signaling by targeting phosphorylated Akt to proteasomal degradation. Mediates polyubiquitination of cytoplasmic TP53 at 'Lys-24' which targets TP53 for proteasomal degradation, thus reducing TP53 levels in the cytoplasm and mitochondrion. Proposed to preferentially act as a SUMO E3 ligase at physiological concentrations. Plays a role in the control of mitochondrial morphology by promoting mitochondrial fragmentation, and influences mitochondrial localization. Likely to promote mitochondrial fission through negatively regulating the mitochondrial fusion proteins MFN1 and MFN2, acting in a pathway that is parallel to the PRKN/PINK1 regulatory pathway. May also be involved in the sumoylation of the membrane fission protein DNM1L. Inhibits cell growth. When overexpressed, activates JNK through MAP3K7/TAK1 and induces caspase-dependent apoptosis. Involved in the modulation of innate immune defense against viruses by inhibiting RIGI-dependent antiviral response. Can mediate RIGI sumoylation and disrupt its polyubiquitination. This Macaca fascicularis (Crab-eating macaque) protein is Mitochondrial ubiquitin ligase activator of NFKB 1 (MUL1).